The primary structure comprises 473 residues: MKAHQSLHVVAGFVRFPMSKTGQSRCYSILKDISIPASKQKFVPSSGTYPKGFLAAGAHAGVKESNTQFPDVALICSETPCSAAAVFTTNKFQAAPVQVSKQVLEAREGADITGVVINSGCANAVTGKGGLEDAKSMSAKVDECNGTPSTSSKRPSTLVMSTGVIGQRLPIEKILNTIPVAHSSLSSTHKAWLTAARAICTTDTFPKLLSRTFTLPSSPNHTYRIAGMTKGAGMIHPNMATLLGILCTDVPISPAALKLLLSHAVSRSFNCISIDGDTSTNDTVALLANGAAGGQTITTPSSPNYAAMQTVLTSFAQSLAQLVVRDGEGATKFVTVRVLNSPSQADARAIASTIARSPLVKTALYGKDANWGRILCAIGYTQGIQAGTVVPERTSVSFKPVDGSEELKLLVNGEPEIVDEERAARILQDEDLEIVVDLGGGERGEEGMGGEEGIYWFCDFSHEYVTINGDYRT.

Positions 201, 230, 241, 328, 468, and 473 each coordinate substrate. The Nucleophile role is filled by T241.

It belongs to the ArgJ family. In terms of assembly, heterodimer of an alpha and a beta chain. Post-translationally, the alpha and beta chains are autoproteolytically processed from a single precursor protein within the mitochondrion.

The protein localises to the mitochondrion matrix. It carries out the reaction N(2)-acetyl-L-ornithine + L-glutamate = N-acetyl-L-glutamate + L-ornithine. The enzyme catalyses L-glutamate + acetyl-CoA = N-acetyl-L-glutamate + CoA + H(+). It participates in amino-acid biosynthesis; L-arginine biosynthesis; L-ornithine and N-acetyl-L-glutamate from L-glutamate and N(2)-acetyl-L-ornithine (cyclic): step 1/1. The protein operates within amino-acid biosynthesis; L-arginine biosynthesis; N(2)-acetyl-L-ornithine from L-glutamate: step 1/4. Catalyzes two activities which are involved in the cyclic version of arginine biosynthesis: the synthesis of acetylglutamate from glutamate and acetyl-CoA, and of ornithine by transacetylation between acetylornithine and glutamate. This chain is Arginine biosynthesis bifunctional protein ArgJ, mitochondrial, found in Paracoccidioides brasiliensis (strain Pb18).